A 160-amino-acid polypeptide reads, in one-letter code: Protein YpjC (160 aa).

The chain is Protein YpjC (ypjC) from Escherichia coli (strain K12).